The primary structure comprises 352 residues: Protein-glutamate methylesterase/protein-glutamine glutaminase (352 aa).

Residues 4 to 121 (RVLIVDDSAT…YDGIDEIQKE (118 aa)) enclose the Response regulatory domain. Residue D55 is modified to 4-aspartylphosphate. One can recognise a CheB-type methylesterase domain in the interval 159–351 (AQTTNKLIAI…VKIASLLSER (193 aa)). Catalysis depends on residues S171, H197, and D293.

It belongs to the CheB family. In terms of processing, phosphorylated by CheA. Phosphorylation of the N-terminal regulatory domain activates the methylesterase activity.

Its subcellular location is the cytoplasm. It catalyses the reaction [protein]-L-glutamate 5-O-methyl ester + H2O = L-glutamyl-[protein] + methanol + H(+). It carries out the reaction L-glutaminyl-[protein] + H2O = L-glutamyl-[protein] + NH4(+). Involved in chemotaxis. Part of a chemotaxis signal transduction system that modulates chemotaxis in response to various stimuli. Catalyzes the demethylation of specific methylglutamate residues introduced into the chemoreceptors (methyl-accepting chemotaxis proteins or MCP) by CheR. Also mediates the irreversible deamidation of specific glutamine residues to glutamic acid. This Sulfurimonas denitrificans (strain ATCC 33889 / DSM 1251) (Thiomicrospira denitrificans (strain ATCC 33889 / DSM 1251)) protein is Protein-glutamate methylesterase/protein-glutamine glutaminase.